The sequence spans 915 residues: Translation initiation factor IF-2 (915 aa).

Disordered stretches follow at residues 1–105 (MSEG…RALT) and 121–295 (VEAA…RAAI). Positions 57–81 (PGTPSAPEGGSSSAPAPQSGNAPQG) are enriched in low complexity. A compositionally biased stretch (gly residues) spans 84–101 (RSGGGNRGSGRGGAGGAG). Composition is skewed to basic and acidic residues over residues 121-135 (VEAA…EQEK) and 143-180 (EEAR…RKAA). Residues 186–195 (AEAPPVPPPA) are compositionally biased toward pro residues. Low complexity-rich tracts occupy residues 201 to 213 (AAPS…SRTA) and 230 to 239 (KVPVAAPSAP). Residues 243–256 (RLRERGDEGEEERK) show a composition bias toward basic and acidic residues. Low complexity predominate over residues 266–278 (PAPRKAAAPVAKK). The span at 279–295 (AVAEPRRGGRIDVRAAI) shows a compositional bias: basic and acidic residues. The 171-residue stretch at 414-584 (PRPPVVTVMG…LLQAEVLDLK (171 aa)) folds into the tr-type G domain. The tract at residues 423-430 (GHVDHGKT) is G1. A GTP-binding site is contributed by 423–430 (GHVDHGKT). A G2 region spans residues 448-452 (GITQH). Positions 470-473 (DTPG) are G3. GTP is bound by residues 470 to 474 (DTPGH) and 524 to 527 (NKCD). Positions 524–527 (NKCD) are G4. The tract at residues 560–562 (SAL) is G5.

Belongs to the TRAFAC class translation factor GTPase superfamily. Classic translation factor GTPase family. IF-2 subfamily.

It is found in the cytoplasm. One of the essential components for the initiation of protein synthesis. Protects formylmethionyl-tRNA from spontaneous hydrolysis and promotes its binding to the 30S ribosomal subunits. Also involved in the hydrolysis of GTP during the formation of the 70S ribosomal complex. The polypeptide is Translation initiation factor IF-2 (Granulibacter bethesdensis (strain ATCC BAA-1260 / CGDNIH1)).